An 87-amino-acid chain; its full sequence is U14-lycotoxin-Ls1a (87 aa).

The first 20 residues, 1–20 (MNSKVFAALLLLALSTCVLS), serve as a signal peptide directing secretion. Positions 21–66 (EKYCPTPRNTSCKKMNIRNNCCRDSDCTSNAFCCAEPCGNFCHKAS) constitute a WAP domain. Disulfide bonds link Cys-24–Cys-54, Cys-32–Cys-58, Cys-41–Cys-53, Cys-42–Cys-80, and Cys-47–Cys-62.

This sequence belongs to the venom protein 11 family. 01 (wap-1) subfamily. In terms of processing, contains 5 disulfide bonds. As to expression, expressed by the venom gland.

It is found in the secreted. Its function is as follows. Has antibacterial activity. In Lycosa singoriensis (Wolf spider), this protein is U14-lycotoxin-Ls1a.